A 298-amino-acid polypeptide reads, in one-letter code: Probable endonuclease 4 (298 aa).

Residues His69, His111, Glu146, Asp180, His183, His215, Asp228, His230, and Glu260 each contribute to the Zn(2+) site.

It belongs to the AP endonuclease 2 family. Requires Zn(2+) as cofactor.

It carries out the reaction Endonucleolytic cleavage to 5'-phosphooligonucleotide end-products.. Endonuclease IV plays a role in DNA repair. It cleaves phosphodiester bonds at apurinic or apyrimidinic (AP) sites, generating a 3'-hydroxyl group and a 5'-terminal sugar phosphate. The sequence is that of Probable endonuclease 4 from Bacillus cereus (strain AH820).